The sequence spans 285 residues: RNA polymerase sigma factor RpoH (285 aa).

The segment at 53–122 (LILSHLRFVV…IHEYVLRNWR (70 aa)) is sigma-70 factor domain-2. Positions 77 to 80 (DLVQ) match the Interaction with polymerase core subunit RpoC motif. The sigma-70 factor domain-4 stretch occupies residues 229 to 280 (ALASLDERSQHIVRSRWLDDDKATLQDLAEMYGVSAERIRQLEKNAMKKLKM). Residues 253–272 (LQDLAEMYGVSAERIRQLEK) constitute a DNA-binding region (H-T-H motif).

This sequence belongs to the sigma-70 factor family. RpoH subfamily. Interacts with the RNA polymerase core enzyme.

The protein localises to the cytoplasm. In terms of biological role, sigma factors are initiation factors that promote the attachment of RNA polymerase to specific initiation sites and are then released. This sigma factor is involved in regulation of expression of heat shock genes. The polypeptide is RNA polymerase sigma factor RpoH (Vibrio vulnificus (strain CMCP6)).